We begin with the raw amino-acid sequence, 277 residues long: Cell division protein ZipA (277 aa).

Residues 1–5 (MQDLR) lie on the Periplasmic side of the membrane. The helical transmembrane segment at 6-26 (LMLLLFGVITIIVLFLHGVWA) threads the bilayer. Over 27–277 (RRKERSALFY…NALIRSTPHL (251 aa)) the chain is Cytoplasmic. Residues 120 to 139 (QKKSDDLSHQSKETHHPSIQ) are disordered.

This sequence belongs to the ZipA family. In terms of assembly, interacts with FtsZ via their C-terminal domains.

The protein resides in the cell inner membrane. Essential cell division protein that stabilizes the FtsZ protofilaments by cross-linking them and that serves as a cytoplasmic membrane anchor for the Z ring. Also required for the recruitment to the septal ring of downstream cell division proteins. The polypeptide is Cell division protein ZipA (Hamiltonella defensa subsp. Acyrthosiphon pisum (strain 5AT)).